Consider the following 525-residue polypeptide: Peptide chain release factor 3 (525 aa).

The tr-type G domain occupies 9-276; it reads AKRRTFAIIS…GFTRYAPAPQ (268 aa). GTP contacts are provided by residues 18-25, 86-90, and 140-143; these read SHPDAGKT, DTPGH, and NKFD.

This sequence belongs to the TRAFAC class translation factor GTPase superfamily. Classic translation factor GTPase family. PrfC subfamily.

The protein localises to the cytoplasm. Increases the formation of ribosomal termination complexes and stimulates activities of RF-1 and RF-2. It binds guanine nucleotides and has strong preference for UGA stop codons. It may interact directly with the ribosome. The stimulation of RF-1 and RF-2 is significantly reduced by GTP and GDP, but not by GMP. This is Peptide chain release factor 3 from Francisella tularensis subsp. tularensis (strain WY96-3418).